Here is a 147-residue protein sequence, read N- to C-terminus: Hemoglobin subunit epsilon (147 aa).

Residues 3–147 (HFTPEEKCII…VAIALAHKYH (145 aa)) enclose the Globin domain. Phosphoserine is present on S51. Residues H64 and H93 each contribute to the heme b site.

This sequence belongs to the globin family. As to expression, red blood cells.

Its function is as follows. Hemoglobin epsilon chain is a beta-type chain found in early embryos. This chain is Hemoglobin subunit epsilon (HBE1), found in Oryctolagus cuniculus (Rabbit).